We begin with the raw amino-acid sequence, 122 residues long: Putative 2'-deoxynucleoside 5'-phosphate N-hydrolase 1 (122 aa).

Residues 4 to 10 (FLSGSIR), Tyr19, His37, Glu83, and 105 to 107 (SAM) contribute to the substrate site.

It belongs to the 2'-deoxynucleoside 5'-phosphate N-hydrolase 1 family. In terms of assembly, monomer and homodimer.

It carries out the reaction a pyrimidine 2'-deoxyribonucleoside 5'-phosphate + H2O = a pyrimidine nucleobase + 2-deoxy-D-ribose 5-phosphate. The catalysed reaction is a purine 2'-deoxyribonucleoside 5'-phosphate + H2O = a purine nucleobase + 2-deoxy-D-ribose 5-phosphate. Catalyzes the cleavage of the N-glycosidic bond of deoxyribonucleoside 5'-monophosphates to yield deoxyribose 5-phosphate and a purine or pyrimidine base. The protein is Putative 2'-deoxynucleoside 5'-phosphate N-hydrolase 1 of Methanococcoides burtonii (strain DSM 6242 / NBRC 107633 / OCM 468 / ACE-M).